Here is a 61-residue protein sequence, read N- to C-terminus: Small ribosomal subunit protein uS14 (61 aa).

Zn(2+) is bound by residues Cys-24, Cys-27, Cys-40, and Cys-43.

It belongs to the universal ribosomal protein uS14 family. Zinc-binding uS14 subfamily. In terms of assembly, part of the 30S ribosomal subunit. Contacts proteins S3 and S10. Requires Zn(2+) as cofactor.

Functionally, binds 16S rRNA, required for the assembly of 30S particles and may also be responsible for determining the conformation of the 16S rRNA at the A site. This is Small ribosomal subunit protein uS14 from Brevibacillus brevis (strain 47 / JCM 6285 / NBRC 100599).